The chain runs to 89 residues: Nitrogen regulatory protein (89 aa).

The region spanning 6–89 (TILTPGRSLV…ALLHLEAPID (84 aa)) is the PTS EIIA type-2 domain. H68 acts as the Tele-phosphohistidine intermediate in catalysis.

The protein localises to the cytoplasm. Functionally, seems to have a role in regulating nitrogen assimilation. The chain is Nitrogen regulatory protein (ptsN) from Pseudomonas putida (Arthrobacter siderocapsulatus).